An 832-amino-acid chain; its full sequence is Conserved oligomeric Golgi complex subunit 5 (832 aa).

2 stretches are compositionally biased toward pro residues: residues 1–11 (MALPPSSPSPS) and 23–38 (NPPPSSLSSGAPPPQT). The segment at 1–49 (MALPPSSPSPSSPSLQRLSTFKNPPPSSLSSGAPPPQTPSSSSSSPLDS) is disordered. Positions 39–49 (PSSSSSSPLDS) are enriched in low complexity.

The protein belongs to the COG5 family. Homodimer. Component of the conserved oligomeric Golgi complex which is composed of eight different subunits and is required for normal Golgi morphology and localization. Interacts with COG3, COG6, COG7 and COG8.

Its subcellular location is the golgi apparatus membrane. Its function is as follows. Required for normal Golgi function. This Arabidopsis thaliana (Mouse-ear cress) protein is Conserved oligomeric Golgi complex subunit 5.